Consider the following 360-residue polypeptide: Decorin (360 aa).

The first 16 residues, 1–16, serve as a signal peptide directing secretion; that stretch reads MTATLILLLLAQVSWA. Positions 17 to 30 are excised as a propeptide; it reads GPFQQRGLFDFMLE. The O-linked (Xyl...) (glycosaminoglycan) serine glycan is linked to Ser-34. 2 cysteine pairs are disulfide-bonded: Cys-55–Cys-61 and Cys-59–Cys-68. LRR repeat units lie at residues 74–94, 95–118, 119–142, 143–163, 164–187, 188–213, 214–234, 235–258, 259–282, 283–305, 306–335, and 336–360; these read DKVP…NNKI, TEIK…NNKI, SKIS…KNHL, KELP…ENEI, TKVR…TNPL, KSSG…DTNI, TTIP…GNKI, TKID…FNDI, SAVD…NNKL, IRVP…NNNI, SVVG…SNPV, and QYWE…GNYK. Residue Asn-212 is glycosylated (N-linked (GlcNAc...) asparagine). 2 N-linked (GlcNAc...) asparagine glycosylation sites follow: Asn-263 and Asn-304. Residues Cys-314 and Cys-347 are joined by a disulfide bond.

It belongs to the small leucine-rich proteoglycan (SLRP) family. SLRP class I subfamily. Binds to type I and type II collagen, fibronectin and TGF-beta. Forms a ternary complex with MFAP2 and ELN. Interacts with DPT. In terms of processing, the attached glycosaminoglycan chain can be either chondroitin sulfate or dermatan sulfate depending upon the tissue of origin.

The protein resides in the secreted. It is found in the extracellular space. The protein localises to the extracellular matrix. In terms of biological role, may affect the rate of fibrils formation. The chain is Decorin (DCN) from Oryctolagus cuniculus (Rabbit).